Here is a 95-residue protein sequence, read N- to C-terminus: ATP-dependent Clp protease adapter protein ClpS (95 aa).

It belongs to the ClpS family. In terms of assembly, binds to the N-terminal domain of the chaperone ClpA.

In terms of biological role, involved in the modulation of the specificity of the ClpAP-mediated ATP-dependent protein degradation. This Synechococcus elongatus (strain ATCC 33912 / PCC 7942 / FACHB-805) (Anacystis nidulans R2) protein is ATP-dependent Clp protease adapter protein ClpS.